A 386-amino-acid polypeptide reads, in one-letter code: Bifunctional enzyme IspD/IspF (386 aa).

The tract at residues 1-231 (MKNGAVIIPA…REKKEPMQKI (231 aa)) is 2-C-methyl-D-erythritol 4-phosphate cytidylyltransferase. Residues 232-386 (RIGHGFDAHQ…SCHAVVLLQQ (155 aa)) form a 2-C-methyl-D-erythritol 2,4-cyclodiphosphate synthase region. Residues aspartate 238 and histidine 240 each contribute to the a divalent metal cation site. 4-CDP-2-C-methyl-D-erythritol 2-phosphate is bound by residues 238–240 (DAH) and 264–265 (HS). An a divalent metal cation-binding site is contributed by histidine 272. Residues 286 to 288 (DIG), 362 to 365 (TTTE), tyrosine 369, and arginine 372 contribute to the 4-CDP-2-C-methyl-D-erythritol 2-phosphate site.

The protein in the N-terminal section; belongs to the IspD/TarI cytidylyltransferase family. IspD subfamily. This sequence in the C-terminal section; belongs to the IspF family. A divalent metal cation serves as cofactor.

The enzyme catalyses 2-C-methyl-D-erythritol 4-phosphate + CTP + H(+) = 4-CDP-2-C-methyl-D-erythritol + diphosphate. The catalysed reaction is 4-CDP-2-C-methyl-D-erythritol 2-phosphate = 2-C-methyl-D-erythritol 2,4-cyclic diphosphate + CMP. Its pathway is isoprenoid biosynthesis; isopentenyl diphosphate biosynthesis via DXP pathway; isopentenyl diphosphate from 1-deoxy-D-xylulose 5-phosphate: step 2/6. It participates in isoprenoid biosynthesis; isopentenyl diphosphate biosynthesis via DXP pathway; isopentenyl diphosphate from 1-deoxy-D-xylulose 5-phosphate: step 4/6. Its function is as follows. Bifunctional enzyme that catalyzes the formation of 4-diphosphocytidyl-2-C-methyl-D-erythritol from CTP and 2-C-methyl-D-erythritol 4-phosphate (MEP) (IspD), and catalyzes the conversion of 4-diphosphocytidyl-2-C-methyl-D-erythritol 2-phosphate (CDP-ME2P) to 2-C-methyl-D-erythritol 2,4-cyclodiphosphate (ME-CPP) with a corresponding release of cytidine 5-monophosphate (CMP) (IspF). In Desulfotalea psychrophila (strain LSv54 / DSM 12343), this protein is Bifunctional enzyme IspD/IspF.